A 501-amino-acid chain; its full sequence is Glycerol kinase (501 aa).

ADP is bound at residue T16. ATP-binding residues include T16, T17, and S18. T16 is a sn-glycerol 3-phosphate binding site. R20 is an ADP binding site. Sn-glycerol 3-phosphate is bound by residues R84, E85, Y135, and D242. Glycerol contacts are provided by R84, E85, Y135, D242, and Q243. 2 residues coordinate ADP: T264 and G307. Positions 264, 307, 311, and 408 each coordinate ATP. An ADP-binding site is contributed by G408.

The protein belongs to the FGGY kinase family.

It catalyses the reaction glycerol + ATP = sn-glycerol 3-phosphate + ADP + H(+). The protein operates within polyol metabolism; glycerol degradation via glycerol kinase pathway; sn-glycerol 3-phosphate from glycerol: step 1/1. In terms of biological role, key enzyme in the regulation of glycerol uptake and metabolism. Catalyzes the phosphorylation of glycerol to yield sn-glycerol 3-phosphate. The protein is Glycerol kinase of Saccharolobus islandicus (strain M.16.27) (Sulfolobus islandicus).